Consider the following 141-residue polypeptide: Hydroperoxide reductase (141 aa).

The protein belongs to the OsmC/Ohr family. In terms of assembly, homodimer.

Its subcellular location is the cytoplasm. In terms of biological role, reduces organic and inorganic peroxide substrates. Protects the cell against oxidative stress. The polypeptide is Hydroperoxide reductase (Mycoplasma genitalium (strain ATCC 33530 / DSM 19775 / NCTC 10195 / G37) (Mycoplasmoides genitalium)).